Here is a 293-residue protein sequence, read N- to C-terminus: Glycine--tRNA ligase alpha subunit (293 aa).

This sequence belongs to the class-II aminoacyl-tRNA synthetase family. Tetramer of two alpha and two beta subunits.

The protein resides in the cytoplasm. The enzyme catalyses tRNA(Gly) + glycine + ATP = glycyl-tRNA(Gly) + AMP + diphosphate. The polypeptide is Glycine--tRNA ligase alpha subunit (Sulfurimonas denitrificans (strain ATCC 33889 / DSM 1251) (Thiomicrospira denitrificans (strain ATCC 33889 / DSM 1251))).